Here is a 184-residue protein sequence, read N- to C-terminus: Probable DNA-directed RNA polymerase subunit delta (184 aa).

Residues 14–82 (KSFIDMAHTL…GENNWGLRDW (69 aa)) enclose the HTH HARE-type domain. The interval 114–184 (LLGEEEEEID…FNDDPDDDKI (71 aa)) is disordered. Acidic residues predominate over residues 117-184 (EEEEEIDDQE…FNDDPDDDKI (68 aa)).

It belongs to the RpoE family. RNAP is composed of a core of 2 alpha, a beta and a beta' subunits. The core is associated with a delta subunit and one of several sigma factors.

Its function is as follows. Participates in both the initiation and recycling phases of transcription. In the presence of the delta subunit, RNAP displays an increased specificity of transcription, a decreased affinity for nucleic acids, and an increased efficiency of RNA synthesis because of enhanced recycling. The chain is Probable DNA-directed RNA polymerase subunit delta from Staphylococcus carnosus (strain TM300).